The primary structure comprises 600 residues: Alpha pinene synthase, chloroplastic (600 aa).

The disordered stretch occupies residues 1–26 (MSSISMHARPLNISAANNHHPSWDRR). A chloroplast-targeting transit peptide spans 1–31 (MSSISMHARPLNISAANNHHPSWDRRVSKPR). 4 residues coordinate Mg(2+): Asp354, Asp358, Asp498, and Glu506. The short motif at 354-358 (DDVYD) is the DDXXD motif element.

This sequence belongs to the terpene synthase family. Tpsa subfamily. Mg(2+) is required as a cofactor. Requires Mn(2+) as cofactor. Barely detectable in leaves.

The protein localises to the plastid. It is found in the chloroplast. It catalyses the reaction (2E)-geranyl diphosphate = alpha-pinene + diphosphate. It functions in the pathway secondary metabolite biosynthesis; terpenoid biosynthesis. In terms of biological role, monoterpene synthase involved in the biosynthesis of volatile compounds widely used in aromatherapy and folk medicine, and present in culinary herbs. Mediates the conversion of (2E)-geranyl diphosphate (GPP) into alpha-pinene and, as minor compounds, into alpha-phellandrene, limonene and alpha-terpinolene. This Lavandula stoechas (Butterfly lavender) protein is Alpha pinene synthase, chloroplastic.